Here is a 473-residue protein sequence, read N- to C-terminus: Cysteine--tRNA ligase (473 aa).

Residue Cys30 participates in Zn(2+) binding. The short motif at 32–42 is the 'HIGH' region element; it reads MTVYDYCHIGH. Zn(2+)-binding residues include Cys213, His238, and Glu242. Positions 270–274 match the 'KMSKS' region motif; sequence KMSKS. Lys273 serves as a coordination point for ATP.

Belongs to the class-I aminoacyl-tRNA synthetase family. Monomer. Zn(2+) serves as cofactor.

Its subcellular location is the cytoplasm. The catalysed reaction is tRNA(Cys) + L-cysteine + ATP = L-cysteinyl-tRNA(Cys) + AMP + diphosphate. The protein is Cysteine--tRNA ligase of Acinetobacter baumannii (strain SDF).